Here is a 263-residue protein sequence, read N- to C-terminus: Flagellar L-ring protein (263 aa).

Residues Met-1–Gly-15 form the signal peptide. A lipid anchor (N-palmitoyl cysteine) is attached at Cys-16. A lipid anchor (S-diacylglycerol cysteine) is attached at Cys-16. A disordered region spans residues Lys-123–Gly-143.

Belongs to the FlgH family. In terms of assembly, the basal body constitutes a major portion of the flagellar organelle and consists of four rings (L,P,S, and M) mounted on a central rod.

It is found in the cell outer membrane. The protein resides in the bacterial flagellum basal body. Functionally, assembles around the rod to form the L-ring and probably protects the motor/basal body from shearing forces during rotation. The polypeptide is Flagellar L-ring protein (Aliivibrio fischeri (strain ATCC 700601 / ES114) (Vibrio fischeri)).